The following is a 509-amino-acid chain: DEAD-box ATP-dependent RNA helicase CshA (509 aa).

A Q motif motif is present at residues 2-30 (QNFKELGISDKTVQTLEAMGFKEPTPIQK). The Helicase ATP-binding domain maps to 33–203 (IPYALEGDDI…QQFMKAPKII (171 aa)). 46 to 53 (AQTGTGKT) lines the ATP pocket. The short motif at 150-153 (DEAD) is the DEAD box element. The Helicase C-terminal domain maps to 214-375 (QIDEYYTIVK…LRPPHRKEVL (162 aa)). 2 stretches are compositionally biased toward basic residues: residues 440 to 459 (ARKNRSSKGGSRRSNHKRGN) and 467 to 482 (RRSKGSKGQSSKKKNQ). Residues 440–509 (ARKNRSSKGG…KGRTFADHQK (70 aa)) form a disordered region. The segment covering 483–492 (KKFDRRDKQQ) has biased composition (basic and acidic residues).

The protein belongs to the DEAD box helicase family. CshA subfamily. As to quaternary structure, oligomerizes, may be a member of the RNA degradosome.

The protein resides in the cytoplasm. It carries out the reaction ATP + H2O = ADP + phosphate + H(+). Functionally, DEAD-box RNA helicase possibly involved in RNA degradation. Unwinds dsRNA in both 5'- and 3'-directions, has RNA-dependent ATPase activity. The polypeptide is DEAD-box ATP-dependent RNA helicase CshA (Staphylococcus epidermidis (strain ATCC 12228 / FDA PCI 1200)).